Reading from the N-terminus, the 88-residue chain is Small ribosomal subunit protein bS20 (88 aa).

A disordered region spans residues 1–20; that stretch reads MANIKQQKKRNKTNEKRRLR.

This sequence belongs to the bacterial ribosomal protein bS20 family.

Binds directly to 16S ribosomal RNA. The polypeptide is Small ribosomal subunit protein bS20 (Phytoplasma australiense).